We begin with the raw amino-acid sequence, 403 residues long: Chorismate synthase (403 aa).

NADP(+)-binding residues include Arg-40 and Arg-46. Residues 140–142 (RSS) and 261–262 (QA) each bind FMN. Residues 277-298 (RRGSEAHDEMVRTDEGVDRETN) are compositionally biased toward basic and acidic residues. The disordered stretch occupies residues 277 to 307 (RRGSEAHDEMVRTDEGVDRETNRAGGLEGGM). FMN-binding positions include Gly-305, 320 to 324 (KPIST), and Arg-346.

This sequence belongs to the chorismate synthase family. As to quaternary structure, homotetramer. It depends on FMNH2 as a cofactor.

The enzyme catalyses 5-O-(1-carboxyvinyl)-3-phosphoshikimate = chorismate + phosphate. It functions in the pathway metabolic intermediate biosynthesis; chorismate biosynthesis; chorismate from D-erythrose 4-phosphate and phosphoenolpyruvate: step 7/7. In terms of biological role, catalyzes the anti-1,4-elimination of the C-3 phosphate and the C-6 proR hydrogen from 5-enolpyruvylshikimate-3-phosphate (EPSP) to yield chorismate, which is the branch point compound that serves as the starting substrate for the three terminal pathways of aromatic amino acid biosynthesis. This reaction introduces a second double bond into the aromatic ring system. The protein is Chorismate synthase of Corynebacterium aurimucosum (strain ATCC 700975 / DSM 44827 / CIP 107346 / CN-1) (Corynebacterium nigricans).